The sequence spans 94 residues: Large ribosomal subunit protein bL25 (94 aa).

This sequence belongs to the bacterial ribosomal protein bL25 family. As to quaternary structure, part of the 50S ribosomal subunit; part of the 5S rRNA/L5/L18/L25 subcomplex. Contacts the 5S rRNA. Binds to the 5S rRNA independently of L5 and L18.

Its function is as follows. This is one of the proteins that binds to the 5S RNA in the ribosome where it forms part of the central protuberance. The chain is Large ribosomal subunit protein bL25 from Enterobacter sp. (strain 638).